A 711-amino-acid polypeptide reads, in one-letter code: Cyclomaltodextrin glucanotransferase (711 aa).

An N-terminal signal peptide occupies residues Met-1 to Ala-31. The segment at Ala-32–Pro-165 is A1. Positions 55, 57, 60, and 61 each coordinate Ca(2+). Cys-71 and Cys-78 are joined by a disulfide. 2 residues coordinate Ca(2+): Gly-79 and Asp-81. Residue Tyr-127 to Trp-128 participates in substrate binding. Asn-166 provides a ligand contact to Ca(2+). Residues Asn-166–His-229 are b. His-167 is a substrate binding site. Ca(2+) is bound at residue Ile-217. Asn-220–Asp-223 contributes to the substrate binding site. Position 226 (Asp-226) interacts with Ca(2+). An A2 region spans residues Gln-230–Tyr-433. Arg-254 is a binding site for substrate. Asp-256 acts as the Nucleophile in catalysis. Lys-259 to His-260 contacts substrate. Position 260 (His-260) interacts with Ca(2+). Glu-284 acts as the Proton donor in catalysis. Substrate is bound by residues His-354, Asp-398, and Arg-402. The segment at Gly-434–Thr-522 is c. A d region spans residues Glu-523–Leu-606. Residues Pro-526–Glu-604 enclose the IPT/TIG domain. In terms of domain architecture, CBM20 spans Val-605–Asn-711. Residues Thr-607 to Asn-711 form an e region.

It belongs to the glycosyl hydrolase 13 family. Monomer. Requires Ca(2+) as cofactor.

It localises to the secreted. It catalyses the reaction Cyclizes part of a (1-&gt;4)-alpha-D-glucan chain by formation of a (1-&gt;4)-alpha-D-glucosidic bond.. This is Cyclomaltodextrin glucanotransferase (cgt) from Geobacillus stearothermophilus (Bacillus stearothermophilus).